The following is a 328-amino-acid chain: PDZ and LIM domain protein 1 (328 aa).

At Thr-2 the chain carries N-acetylthreonine. One can recognise a PDZ domain in the interval 3–85; the sequence is TLQIVLQGPG…NMTLTVARSE (83 aa). Phosphoserine occurs at positions 90 and 130. The residue at position 144 (Tyr-144) is a Phosphotyrosine. Residues 257-316 form the LIM zinc-binding domain; that stretch reads PMCDKCGTGIVGVFVKLRERHRHPECYVCTDCGTNLKQKGHFFVEDQIYCEKHARERVTP. Positions 259, 262, 279, 282, 285, 288, 306, and 309 each coordinate Zn(2+). Thr-315 is modified (phosphothreonine). A Phosphotyrosine modification is found at Tyr-320.

Interacts with ACTN1, ACTN2 and ACTN4. Interacts with PDLIM4.

It localises to the cytoplasm. It is found in the cytoskeleton. Its subcellular location is the myofibril. The protein resides in the sarcomere. The protein localises to the z line. In terms of biological role, cytoskeletal protein that may act as an adapter that brings other proteins (like kinases) to the cytoskeleton. Involved in assembly, disassembly and directioning of stress fibers in fibroblasts. Required for the localization of ACTN1 and PALLD to stress fibers. Required for cell migration and in maintaining cell polarity of fibroblasts. This is PDZ and LIM domain protein 1 (PDLIM1) from Bos taurus (Bovine).